Here is a 158-residue protein sequence, read N- to C-terminus: Transcriptional repressor NrdR (158 aa).

The segment at 3–34 (CPYCGYPDSKVIDSRPTDDNTSIRRRRECLKC) is a zinc-finger region. One can recognise an ATP-cone domain in the interval 49–139 (ILVIKKDNRR…VYRQFKDINT (91 aa)).

It belongs to the NrdR family. Zn(2+) is required as a cofactor.

Functionally, negatively regulates transcription of bacterial ribonucleotide reductase nrd genes and operons by binding to NrdR-boxes. The chain is Transcriptional repressor NrdR from Thermoanaerobacter sp. (strain X514).